Reading from the N-terminus, the 252-residue chain is Triosephosphate isomerase (252 aa).

8–10 (NWK) is a substrate binding site. His-95 serves as the catalytic Electrophile. The active-site Proton acceptor is Glu-167. Residues Gly-173, Ser-212, and 233–234 (GG) contribute to the substrate site.

Belongs to the triosephosphate isomerase family. As to quaternary structure, homodimer.

It is found in the cytoplasm. The catalysed reaction is D-glyceraldehyde 3-phosphate = dihydroxyacetone phosphate. The protein operates within carbohydrate biosynthesis; gluconeogenesis. Its pathway is carbohydrate degradation; glycolysis; D-glyceraldehyde 3-phosphate from glycerone phosphate: step 1/1. In terms of biological role, involved in the gluconeogenesis. Catalyzes stereospecifically the conversion of dihydroxyacetone phosphate (DHAP) to D-glyceraldehyde-3-phosphate (G3P). This Lawsonia intracellularis (strain PHE/MN1-00) protein is Triosephosphate isomerase.